Reading from the N-terminus, the 663-residue chain is Rap1 GTPase-activating protein 1 (663 aa).

The 17-residue stretch at 1–17 folds into the GoLoco domain; the sequence is MIEKMQGSRMDEQRCSF. Residues 1–23 form a disordered region; sequence MIEKMQGSRMDEQRCSFPPPLKT. F17 carries the phosphoserine modification. In terms of domain architecture, Rap-GAP spans 181–397; sequence IVTFDEHVIS…RTRAALLETL (217 aa). S441 is modified (phosphoserine). Disordered regions lie at residues 442–604 and 616–645; these read MDAM…PHKR and SVST…PACP. The segment covering 450–465 has biased composition (polar residues); that stretch reads KKPNTVSTSHSGSFAP. Phosphoserine is present on residues S484, S499, S515, S541, and S542. Residues 535–549 show a composition bias toward polar residues; the sequence is ENSSTQSSPEMPTTK. Residues 567-579 show a composition bias toward low complexity; it reads RSSSSASSFASVV. A compositionally biased stretch (acidic residues) spans 580 to 591; the sequence is EETEGVDGEDTG. Residues 616 to 630 show a composition bias toward low complexity; it reads SVSTTSGGSSPGPSR.

Homodimer and heterodimer with RAP1B. In terms of tissue distribution, significant expression seen in the brain, kidney and pancreas. Abundant in the cerebral cortex and expressed at much lower levels in the spinal cord. Not detected in the lymphoid tissues.

The protein localises to the golgi apparatus membrane. Functionally, GTPase activator for the nuclear Ras-related regulatory protein RAP-1A (KREV-1), converting it to the putatively inactive GDP-bound state. This is Rap1 GTPase-activating protein 1 (RAP1GAP) from Homo sapiens (Human).